Here is a 238-residue protein sequence, read N- to C-terminus: Formate dehydrogenase, cytochrome b556 subunit (238 aa).

Positions 23 and 62 each coordinate heme b. 4 helical membrane-spanning segments follow: residues 23–43 (HWML…FFFP), 60–80 (AIHP…ALLY), 120–140 (MLFW…IIMW), and 155–175 (IAIL…LVHI). The heme b site is built by H160 and H174.

It belongs to the formate dehydrogenase gamma subunit family. Formate dehydrogenase is a membrane-bound complex, formed by subunits alpha, beta and gamma. Heme serves as cofactor.

The protein localises to the cell membrane. Allows to use formate as major electron donor during anaerobic respiration. Subunit gamma is probably the cytochrome b556(FDO) component of the formate dehydrogenase. The protein is Formate dehydrogenase, cytochrome b556 subunit (fdxI) of Haemophilus influenzae (strain ATCC 51907 / DSM 11121 / KW20 / Rd).